A 141-amino-acid polypeptide reads, in one-letter code: Large ribosomal subunit protein uL16 (141 aa).

Over residues 1–17 (MLQPKRTKYRKVQKGKM) the composition is skewed to basic residues. The disordered stretch occupies residues 1 to 29 (MLQPKRTKYRKVQKGKMKGNSQRGHELSN).

Belongs to the universal ribosomal protein uL16 family. Part of the 50S ribosomal subunit.

Functionally, binds 23S rRNA and is also seen to make contacts with the A and possibly P site tRNAs. In Flavobacterium psychrophilum (strain ATCC 49511 / DSM 21280 / CIP 103535 / JIP02/86), this protein is Large ribosomal subunit protein uL16.